The chain runs to 82 residues: UPF0153 protein VC_1057 (82 aa).

This sequence belongs to the UPF0153 family.

This chain is UPF0153 protein VC_1057, found in Vibrio cholerae serotype O1 (strain ATCC 39315 / El Tor Inaba N16961).